The chain runs to 914 residues: Protein translocase subunit SecA (914 aa).

Residues glutamine 87, 105–109, and aspartate 500 each bind ATP; that span reads GEGKT. 4 residues coordinate Zn(2+): cysteine 898, cysteine 900, cysteine 909, and histidine 910.

This sequence belongs to the SecA family. Monomer and homodimer. Part of the essential Sec protein translocation apparatus which comprises SecA, SecYEG and auxiliary proteins SecDF-YajC and YidC. Zn(2+) is required as a cofactor.

Its subcellular location is the cell inner membrane. The protein resides in the cytoplasm. The catalysed reaction is ATP + H2O + cellular proteinSide 1 = ADP + phosphate + cellular proteinSide 2.. Its function is as follows. Part of the Sec protein translocase complex. Interacts with the SecYEG preprotein conducting channel. Has a central role in coupling the hydrolysis of ATP to the transfer of proteins into and across the cell membrane, serving as an ATP-driven molecular motor driving the stepwise translocation of polypeptide chains across the membrane. The polypeptide is Protein translocase subunit SecA (Acidithiobacillus ferrooxidans (strain ATCC 23270 / DSM 14882 / CIP 104768 / NCIMB 8455) (Ferrobacillus ferrooxidans (strain ATCC 23270))).